The following is a 1505-amino-acid chain: Probable serine/threonine-protein kinase irlD (1505 aa).

Over residues 1 to 18 the composition is skewed to basic residues; it reads MGPKKGKRSHSKNHHHHN. Disordered regions lie at residues 1-30, 121-211, 548-571, and 862-1013; these read MGPKKGKRSHSKNHHHHNNGNNNNNNNSGG, IPQP…NNIL, TTTTTTTTTTTTTTIDKDEKDKEN, and EENE…TIAT. A compositionally biased stretch (low complexity) spans 139-158; the sequence is SISTTTTTTTATAIEIESSS. Residues 159–172 are compositionally biased toward polar residues; it reads GLTSNITDSTEIQL. Low complexity-rich tracts occupy residues 173-209 and 548-561; these read DSTTTDTKTTSTTSTTTNNSSDSNNNNNNNNNNNSNN and TTTTTTTTTTTTTT. Composition is skewed to basic and acidic residues over residues 562 to 571 and 862 to 882; these read IDKDEKDKEN and EENEKKRLKEKRKKEEKEKKK. Positions 846-892 form a coiled coil; sequence IRTEESLKAEKDLLEQEENEKKRLKEKRKKEEKEKKKQQNLKQKSLI. The segment covering 896 to 924 has biased composition (low complexity); the sequence is TTTTTTTTPIPITVPIPTQTQTPTQTPTQ. The segment covering 925–943 has biased composition (pro residues); that stretch reads TPIPTPIPTTPIPTTPIPI. 2 stretches are compositionally biased toward low complexity: residues 944 to 954 and 960 to 977; these read PIQLTPTTPKT and TPKTPTTPKTPITPKTPK. Over residues 978 to 989 the composition is skewed to polar residues; that stretch reads NSTLDKQTISTP. The 271-residue stretch at 1054–1324 folds into the Protein kinase domain; sequence RKDEFIIGRG…TENILLHPFF (271 aa). ATP is bound by residues 1060 to 1068 and K1083; that span reads IGRGSNGTL. D1194 acts as the Proton acceptor in catalysis. Positions 1327–1505 constitute a KEN domain; that stretch reads HEKKVKFIDA…LIYFNDLIIK (179 aa).

Belongs to the protein kinase superfamily. Ser/Thr protein kinase family.

It catalyses the reaction L-seryl-[protein] + ATP = O-phospho-L-seryl-[protein] + ADP + H(+). It carries out the reaction L-threonyl-[protein] + ATP = O-phospho-L-threonyl-[protein] + ADP + H(+). The sequence is that of Probable serine/threonine-protein kinase irlD (irlD) from Dictyostelium discoideum (Social amoeba).